The chain runs to 73 residues: Large ribosomal subunit protein bL31 (73 aa).

C16, C18, C36, and C39 together coordinate Zn(2+).

Belongs to the bacterial ribosomal protein bL31 family. Type A subfamily. In terms of assembly, part of the 50S ribosomal subunit. Zn(2+) is required as a cofactor.

Functionally, binds the 23S rRNA. This chain is Large ribosomal subunit protein bL31, found in Desulfosudis oleivorans (strain DSM 6200 / JCM 39069 / Hxd3) (Desulfococcus oleovorans).